We begin with the raw amino-acid sequence, 304 residues long: Glycine--tRNA ligase alpha subunit (304 aa).

This sequence belongs to the class-II aminoacyl-tRNA synthetase family. In terms of assembly, tetramer of two alpha and two beta subunits.

It localises to the cytoplasm. It carries out the reaction tRNA(Gly) + glycine + ATP = glycyl-tRNA(Gly) + AMP + diphosphate. The protein is Glycine--tRNA ligase alpha subunit of Yersinia enterocolitica serotype O:8 / biotype 1B (strain NCTC 13174 / 8081).